The sequence spans 92 residues: Small ribosomal subunit protein bS18 (92 aa).

This sequence belongs to the bacterial ribosomal protein bS18 family. Part of the 30S ribosomal subunit. Forms a tight heterodimer with protein bS6.

Binds as a heterodimer with protein bS6 to the central domain of the 16S rRNA, where it helps stabilize the platform of the 30S subunit. In Caulobacter sp. (strain K31), this protein is Small ribosomal subunit protein bS18.